The following is a 170-amino-acid chain: CDP-archaeol synthase (170 aa).

5 helical membrane-spanning segments follow: residues Leu6–Val26, Gly53–Pro73, Leu83–Phe103, Pro114–Val134, and Gly140–Ala160.

Belongs to the CDP-archaeol synthase family. Mg(2+) serves as cofactor.

The protein resides in the cell membrane. The catalysed reaction is 2,3-bis-O-(geranylgeranyl)-sn-glycerol 1-phosphate + CTP + H(+) = CDP-2,3-bis-O-(geranylgeranyl)-sn-glycerol + diphosphate. It functions in the pathway membrane lipid metabolism; glycerophospholipid metabolism. Catalyzes the formation of CDP-2,3-bis-(O-geranylgeranyl)-sn-glycerol (CDP-archaeol) from 2,3-bis-(O-geranylgeranyl)-sn-glycerol 1-phosphate (DGGGP) and CTP. This reaction is the third ether-bond-formation step in the biosynthesis of archaeal membrane lipids. This is CDP-archaeol synthase from Thermococcus onnurineus (strain NA1).